Here is a 257-residue protein sequence, read N- to C-terminus: TLC domain-containing protein 3A (257 aa).

Transmembrane regions (helical) follow at residues 1–21 (MLLT…LSIW), 42–62 (LVSS…IISC), 71–91 (WLAT…FYAM), 114–134 (LIEN…LVPI), 142–162 (LGDF…FVSL), 181–201 (GILT…FMYW), and 220–240 (LHCN…FSLL). The TLC domain occupies 33-249 (DDCLTVGTRL…LCKKAARLFD (217 aa)).

In terms of assembly, interacts with GGT7 isoform 3 and SLC3A2.

It is found in the cell membrane. This chain is TLC domain-containing protein 3A (Tlcd3a), found in Mus musculus (Mouse).